A 139-amino-acid chain; its full sequence is Membrane protein YqfB (139 aa).

Residues 3-23 (DLLTNPLIIAAIIGIISAIFG) traverse the membrane as a helical segment. Positions 25 to 87 (KSKEEKQNSQ…TARNLKGLER (63 aa)) are disordered. The stretch at 62–97 (NRMEQARREAEERRRETARNLKGLERDLAAAKQKTV) forms a coiled coil. Basic and acidic residues predominate over residues 65-87 (EQARREAEERRRETARNLKGLER).

The protein resides in the cell membrane. This Bacillus subtilis (strain 168) protein is Membrane protein YqfB (yqfB).